We begin with the raw amino-acid sequence, 604 residues long: Solute carrier family 23 member 1 (604 aa).

The tract at residues 1 to 29 is disordered; the sequence is MKAQEDPGSSKQHECPDSAGTSTRDQQAP. Topologically, residues 1-59 are cytoplasmic; the sequence is MKAQEDPGSSKQHECPDSAGTSTRDQQAPLPAEPKFDMLYKIEDVPPWYLCILLGFQHY. The helical transmembrane segment at 60 to 80 threads the bilayer; sequence LTCFSGTIAVPFLLAEALCVG. Residues 81 to 88 are Extracellular-facing; that stretch reads RDQHMISQ. The helical transmembrane segment at 89–109 threads the bilayer; sequence LIGTIFTCVGITTLIQTTVGI. R110 is a topological domain (cytoplasmic). A helical membrane pass occupies residues 111–131; sequence LPLFQASAFAFLVPAKAILAL. Topologically, residues 132–166 are extracellular; it reads ERWKCPPEEEIYGNWSMPLNTSHIWHPRIREVQGA. N145 and N151 each carry an N-linked (GlcNAc...) asparagine glycan. Residues 167–187 form a helical membrane-spanning segment; the sequence is IMVSSVVEVVIGLLGLPGALL. Over 188 to 214 the chain is Cytoplasmic; that stretch reads SYIGPLTVTPTVSLIGLSVFQAAGDRA. The chain crosses the membrane as a helical span at residues 215-232; sequence GSHWGISACSILLIVLFS. Residues 233 to 236 lie on the Extracellular side of the membrane; sequence QYLR. Positions 237 to 250 form an intramembrane region, helical; it reads NLTFLLPVYRWGKG. Residues 251 to 257 lie on the Extracellular side of the membrane; that stretch reads LTLFRIQ. A helical membrane pass occupies residues 258 to 278; sequence IFKMFPIVLAIMTVWLLCYVL. At 279–319 the chain is on the cytoplasmic side; the sequence is TLTDVLPADPTVYGFQARTDARGDIMAISPWIRIPYPCQWG. A helical transmembrane segment spans residues 320-340; that stretch reads LPTVTVAAVLGMFSATLAGII. At 341 to 365 the chain is on the extracellular side; the sequence is ESIGDYYACARLAGAPPPPVHAINR. The helical transmembrane segment at 366-386 threads the bilayer; that stretch reads GIFTEGVCCIIAGLLGTGNGS. Over 387-409 the chain is Cytoplasmic; it reads TSSSPNIGVLGITKVGSRRVVQY. A helical membrane pass occupies residues 410–430; the sequence is GAGIMLILGAIGKFTALFASL. The Extracellular segment spans residues 431 to 433; that stretch reads PDP. A helical membrane pass occupies residues 434-454; sequence ILGGMFCTLFGMITAVGLSNL. At 455 to 464 the chain is on the cytoplasmic side; it reads QFVDMNSSRN. The helical transmembrane segment at 465 to 485 threads the bilayer; that stretch reads LFVLGFSMFFGLTLPNYLDSN. The Extracellular portion of the chain corresponds to 486-497; the sequence is PGAINTGVPEVD. The chain crosses the membrane as a helical span at residues 498-518; it reads QILTVLLTTEMFVGGCLAFIL. Topologically, residues 519 to 604 are cytoplasmic; the sequence is DNTVPGSPEE…TETGSVCTKV (86 aa). Phosphothreonine is present on T597. S599 carries the phosphoserine modification. T602 is subject to Phosphothreonine.

It belongs to the nucleobase:cation symporter-2 (NCS2) (TC 2.A.40) family. Phosphorylated. In terms of tissue distribution, highly expressed in the straight segment of proximal tubules in the kidney, in intestine and liver. Detected in epithelial cells of the bronchiole and epididymis.

It localises to the cell membrane. It catalyses the reaction L-ascorbate(out) + 2 Na(+)(out) = L-ascorbate(in) + 2 Na(+)(in). The enzyme catalyses urate(out) + 2 Na(+)(out) = urate(in) + 2 Na(+)(in). Its function is as follows. Sodium/ascorbate cotransporter. Mediates electrogenic uptake of vitamin C, with a stoichiometry of 2 Na(+) for each ascorbate. Has retained some ancestral activity toward nucleobases such as urate, an oxidized purine. Low-affinity high-capacity sodium:urate cotransporter, may regulate serum urate levels by serving as a renal urate re-absorber. This Rattus norvegicus (Rat) protein is Solute carrier family 23 member 1 (Slc23a1).